Here is a 379-residue protein sequence, read N- to C-terminus: Glutamate 5-kinase (379 aa).

K14 contributes to the ATP binding site. Positions 54, 141, and 153 each coordinate substrate. Residues 173-174 and 215-221 each bind ATP; these read TD and TGGMATK. The region spanning 280 to 358 is the PUA domain; the sequence is KGRLLLDIGA…DEIEPLLGYD (79 aa).

It belongs to the glutamate 5-kinase family.

The protein resides in the cytoplasm. The enzyme catalyses L-glutamate + ATP = L-glutamyl 5-phosphate + ADP. The protein operates within amino-acid biosynthesis; L-proline biosynthesis; L-glutamate 5-semialdehyde from L-glutamate: step 1/2. Its function is as follows. Catalyzes the transfer of a phosphate group to glutamate to form L-glutamate 5-phosphate. In Shewanella amazonensis (strain ATCC BAA-1098 / SB2B), this protein is Glutamate 5-kinase.